Here is a 49-residue protein sequence, read N- to C-terminus: Large ribosomal subunit protein bL33 (49 aa).

This sequence belongs to the bacterial ribosomal protein bL33 family.

The chain is Large ribosomal subunit protein bL33 from Pelotomaculum thermopropionicum (strain DSM 13744 / JCM 10971 / SI).